We begin with the raw amino-acid sequence, 388 residues long: Chorismate synthase (388 aa).

NADP(+)-binding residues include Arg39 and Arg45. Residues 95–118 (EKNEKSRRVSRPRPGHADLVGGMK) are disordered. FMN is bound by residues 130-132 (RSS), 251-252 (NA), Gly296, 311-315 (KPIPT), and Arg337.

This sequence belongs to the chorismate synthase family. As to quaternary structure, homotetramer. The cofactor is FMNH2.

It catalyses the reaction 5-O-(1-carboxyvinyl)-3-phosphoshikimate = chorismate + phosphate. It functions in the pathway metabolic intermediate biosynthesis; chorismate biosynthesis; chorismate from D-erythrose 4-phosphate and phosphoenolpyruvate: step 7/7. Catalyzes the anti-1,4-elimination of the C-3 phosphate and the C-6 proR hydrogen from 5-enolpyruvylshikimate-3-phosphate (EPSP) to yield chorismate, which is the branch point compound that serves as the starting substrate for the three terminal pathways of aromatic amino acid biosynthesis. This reaction introduces a second double bond into the aromatic ring system. The polypeptide is Chorismate synthase (Listeria monocytogenes serovar 1/2a (strain ATCC BAA-679 / EGD-e)).